The following is a 164-amino-acid chain: Large ribosomal subunit protein uL10 (164 aa).

The protein belongs to the universal ribosomal protein uL10 family. Part of the ribosomal stalk of the 50S ribosomal subunit. The N-terminus interacts with L11 and the large rRNA to form the base of the stalk. The C-terminus forms an elongated spine to which L12 dimers bind in a sequential fashion forming a multimeric L10(L12)X complex.

In terms of biological role, forms part of the ribosomal stalk, playing a central role in the interaction of the ribosome with GTP-bound translation factors. The sequence is that of Large ribosomal subunit protein uL10 (rplJ) from Helicobacter pylori (strain J99 / ATCC 700824) (Campylobacter pylori J99).